A 183-amino-acid chain; its full sequence is Peptide deformylase-like (183 aa).

Glu-140 is an active-site residue.

The protein belongs to the polypeptide deformylase family.

This chain is Peptide deformylase-like, found in Rickettsia conorii (strain ATCC VR-613 / Malish 7).